We begin with the raw amino-acid sequence, 371 residues long: uncharacterized protein (371 aa).

The next 7 helical transmembrane spans lie at 9-29 (FTLD…VFLI), 58-78 (VLAF…FLAI), 98-118 (LIVA…SFIF), 133-153 (LAPF…VSVI), 159-179 (YDVN…ALAA), 183-203 (ISNF…IGDW), and 330-350 (IIEI…MVVV).

Belongs to the MscS (TC 1.A.23) family.

It is found in the cell membrane. Functionally, may play a role in resistance to osmotic downshock. This is an uncharacterized protein from Bacillus subtilis (strain 168).